Here is a 300-residue protein sequence, read N- to C-terminus: D-alanine--D-alanine ligase (300 aa).

Residues 99-293 (KKILKYANIN…FAELLNSIVK (195 aa)) form the ATP-grasp domain. 126 to 181 (IEKIGYPVFVKPNSGGSSVATNLVKDKEGIKEAVELALKYDKEVMIENYTKGEEIT) contacts ATP. Mg(2+) contacts are provided by Asp248, Glu260, and Asn262.

The protein belongs to the D-alanine--D-alanine ligase family. Mg(2+) is required as a cofactor. Mn(2+) serves as cofactor.

Its subcellular location is the cytoplasm. The enzyme catalyses 2 D-alanine + ATP = D-alanyl-D-alanine + ADP + phosphate + H(+). It participates in cell wall biogenesis; peptidoglycan biosynthesis. Cell wall formation. The protein is D-alanine--D-alanine ligase of Clostridium botulinum (strain ATCC 19397 / Type A).